An 815-amino-acid polypeptide reads, in one-letter code: Chromatin assembly factor 1 subunit FAS1 (815 aa).

Disordered stretches follow at residues 1 to 39 (MDEV…TSEE), 292 to 330 (NNKE…KKQL), 434 to 477 (KLST…KKSR), 502 to 577 (QVVK…EGVQ), and 791 to 815 (RCLP…NENA). Composition is skewed to basic and acidic residues over residues 10 to 21 (NENRKTMIEPKK) and 292 to 328 (NNKE…ELKK). Residues 244–336 (EEKLLLKQLE…KKQLQVQKQA (93 aa)) adopt a coiled-coil conformation. Acidic residues-rich tracts occupy residues 516 to 532 (LDYE…EEAG) and 554 to 576 (DDED…DEGV). Basic and acidic residues predominate over residues 806-815 (AAERLENENA).

It belongs to the CHAF1A family. In terms of assembly, component of the chromatin assembly factor 1 (CAF-1) complex, composed of FAS1, FAS2 and MSI1. Interacts with CYP71. In terms of tissue distribution, expressed in the shoot apical meristem, young leaf primordia, root tip and first lateral root primordium at the hypocotyl/root junction.

The protein localises to the nucleus. In terms of biological role, component of the chromatin assembly factor complex (CAF-1) involved in chromatin assembly following DNA replication and DNA repair. Assembles histone octamers onto replicating DNA in vitro. Required for several aspects of development, including seedling growth and leaf hair differentiation. Plays a critical role in the organization of shoot apical meristem (SAM) and root apical meristem (RAM) during postembryonic development by facilitating stable maintenance of gene expression states. Seems not required to maintain transcriptional repression of heterochromatic genes. Involved in heterologous recombination. May repress endocycle. In Arabidopsis thaliana (Mouse-ear cress), this protein is Chromatin assembly factor 1 subunit FAS1 (FAS1).